The chain runs to 311 residues: Maspardin (311 aa).

In terms of domain architecture, AB hydrolase-1 spans 86 to 159 (EFCDGFRKLL…NSFWLMPSFM (74 aa)).

It belongs to the AB hydrolase superfamily.

It is found in the cytoplasm. This chain is Maspardin (spg21), found in Danio rerio (Zebrafish).